The primary structure comprises 504 residues: Signal recognition particle subunit SRP54 (504 aa).

The tract at residues methionine 1–leucine 295 is NG domain. GTP contacts are provided by residues glycine 108–threonine 115, aspartate 190–arginine 194, and threonine 248–aspartate 251. Residues glycine 296 to methionine 504 are M-domain.

This sequence belongs to the GTP-binding SRP family. SRP54 subfamily. Component of a signal recognition particle (SRP) complex that consists of a 7SL RNA molecule of 300 nucleotides and six protein subunits: SRP72, SRP68, SRP54, SRP19, SRP14 and SRP9. Interacts with RNPS1. Interacts with the SRP receptor subunit SRPRA.

It is found in the nucleus speckle. Its subcellular location is the cytoplasm. The protein resides in the endoplasmic reticulum. It catalyses the reaction GTP + H2O = GDP + phosphate + H(+). Functionally, component of the signal recognition particle (SRP) complex, a ribonucleoprotein complex that mediates the cotranslational targeting of secretory and membrane proteins to the endoplasmic reticulum (ER). As part of the SRP complex, associates with the SRP receptor (SR) component SRPRA to target secretory proteins to the endoplasmic reticulum membrane. Binds to the signal sequence of presecretory proteins when they emerge from the ribosomes. Displays basal GTPase activity, and stimulates reciprocal GTPase activation of the SR subunit SRPRA. Forms a guanosine 5'-triphosphate (GTP)-dependent complex with the SR subunit SRPRA. SR compaction and GTPase mediated rearrangement of SR drive SRP-mediated cotranslational protein translocation into the ER. Requires the presence of SRP9/SRP14 and/or SRP19 to stably interact with RNA. Plays a role in proliferation and differentiation of granulocytic cells, neutrophils migration capacity and exocrine pancreas development. The sequence is that of Signal recognition particle subunit SRP54 from Homo sapiens (Human).